The primary structure comprises 100 residues: Large ribosomal subunit protein bL27 (100 aa).

Positions 1-13 (MNKLYWLTDLQLF) are excised as a propeptide. Residues 18–29 (GVDSSKNGRDSN) show a composition bias toward basic and acidic residues. The tract at residues 18-39 (GVDSSKNGRDSNPKYLGAKLGD) is disordered.

This sequence belongs to the bacterial ribosomal protein bL27 family. In terms of processing, the N-terminus is cleaved by ribosomal processing cysteine protease Prp.

This is Large ribosomal subunit protein bL27 from Ureaplasma urealyticum serovar 10 (strain ATCC 33699 / Western).